The following is a 172-amino-acid chain: Zinc finger C2HC domain-containing protein 1B (172 aa).

2 C2HC/C3H-type zinc fingers span residues 14-43 (KLFP…VFNK) and 117-146 (DYIQ…QTSR). Positions 18, 21, 33, 37, 121, 124, 136, and 140 each coordinate Zn(2+).

Belongs to the ZC2HC1 family. Zn(2+) serves as cofactor.

This is Zinc finger C2HC domain-containing protein 1B (Zc2hc1b) from Mus musculus (Mouse).